The primary structure comprises 63 residues: Transmembrane protein ZNF593OS (63 aa).

A helical transmembrane segment spans residues 30–50 (LAGVVATVLAVLGLGGSCYAV).

Its subcellular location is the membrane. The polypeptide is Transmembrane protein ZNF593OS (Homo sapiens (Human)).